A 136-amino-acid chain; its full sequence is ATP synthase epsilon chain (136 aa).

Positions 88–136 (DASSAESDLQAARNEVSKMEGQPASADKVKAQQSLDRARARVQAAKNQD) are disordered.

The protein belongs to the ATPase epsilon chain family. In terms of assembly, F-type ATPases have 2 components, CF(1) - the catalytic core - and CF(0) - the membrane proton channel. CF(1) has five subunits: alpha(3), beta(3), gamma(1), delta(1), epsilon(1). CF(0) has three main subunits: a, b and c.

The protein resides in the cellular thylakoid membrane. Functionally, produces ATP from ADP in the presence of a proton gradient across the membrane. This Synechococcus sp. (strain WH7803) protein is ATP synthase epsilon chain.